We begin with the raw amino-acid sequence, 226 residues long: 7-cyano-7-deazaguanine synthase (226 aa).

7–17 (ISGGMDSLVVA) serves as a coordination point for ATP. 4 residues coordinate Zn(2+): Cys187, Cys195, Cys198, and Cys201.

Belongs to the QueC family. Requires Zn(2+) as cofactor.

The enzyme catalyses 7-carboxy-7-deazaguanine + NH4(+) + ATP = 7-cyano-7-deazaguanine + ADP + phosphate + H2O + H(+). The protein operates within purine metabolism; 7-cyano-7-deazaguanine biosynthesis. In terms of biological role, catalyzes the ATP-dependent conversion of 7-carboxy-7-deazaguanine (CDG) to 7-cyano-7-deazaguanine (preQ(0)). The chain is 7-cyano-7-deazaguanine synthase from Chlorobium phaeobacteroides (strain BS1).